The sequence spans 321 residues: Peroxidase 5 (321 aa).

The N-terminal stretch at 1–24 (MERFSLRFVLMMVSIILTSSICQA) is a signal peptide. The residue at position 25 (Q25) is a Pyrrolidone carboxylic acid. 4 cysteine pairs are disulfide-bonded: C35-C115, C68-C73, C121-C317, and C201-C227. The active-site Proton acceptor is H66. Ca(2+) contacts are provided by D67, V70, G72, D74, and S76. P164 provides a ligand contact to substrate. H194 serves as a coordination point for heme b. Ca(2+) is bound at residue T195. N211 carries an N-linked (GlcNAc...) asparagine glycan. D240, T243, and D248 together coordinate Ca(2+). N285 is a glycosylation site (N-linked (GlcNAc...) asparagine).

Belongs to the peroxidase family. Classical plant (class III) peroxidase subfamily. Heme b is required as a cofactor. It depends on Ca(2+) as a cofactor.

It localises to the secreted. The enzyme catalyses 2 a phenolic donor + H2O2 = 2 a phenolic radical donor + 2 H2O. Its function is as follows. Removal of H(2)O(2), oxidation of toxic reductants, biosynthesis and degradation of lignin, suberization, auxin catabolism, response to environmental stresses such as wounding, pathogen attack and oxidative stress. These functions might be dependent on each isozyme/isoform in each plant tissue. The sequence is that of Peroxidase 5 (PER5) from Arabidopsis thaliana (Mouse-ear cress).